Reading from the N-terminus, the 307-residue chain is Elongation factor Ts, mitochondrial (307 aa).

The N-terminal 19 residues, 1 to 19 (MIFTRLTRFVGHGTGLRLY), are a transit peptide targeting the mitochondrion.

The protein belongs to the EF-Ts family.

The protein localises to the mitochondrion. Its function is as follows. Associates with the EF-Tu.GDP complex and induces the exchange of GDP to GTP. It remains bound to the aminoacyl-tRNA.EF-Tu.GTP complex up to the GTP hydrolysis stage on the ribosome. In Aedes aegypti (Yellowfever mosquito), this protein is Elongation factor Ts, mitochondrial.